The sequence spans 1958 residues: Echinoderm microtubule-associated protein-like 6 (1958 aa).

WD repeat units lie at residues 59–100 (GHND…TVSL), 104–145 (VHTH…LLAS), 148–187 (GHSD…LTAK), 195–233 (GDLQ…RTIQ), 235–273 (AHSA…TKID), 280–321 (GYKG…LILQ), 323–362 (HCEG…LIAR), 364–403 (NMEE…EVVH), 406–445 (DRKE…KKIG), and 561–601 (GHSA…VSNG). Positions 603–626 (LETAPQEGGADSYSEESDSDLSDV) are disordered. Residues 615–626 (YSEESDSDLSDV) are compositionally biased toward acidic residues. WD repeat units lie at residues 725-766 (GHDD…CLSL), 770-811 (QHQR…KIAT), 814-853 (GHKD…FTSK), 861-900 (GKLE…KTVK), 901-940 (AHDG…KTYA), 996-1035 (HMEG…RMLA), 1038-1077 (KLKK…DMVS), 1080-1120 (HRKE…RVGI), 1191-1230 (SDIT…QHAR), and 1236-1276 (GHSA…TQES). A compositionally biased stretch (basic and acidic residues) spans 1322–1337 (KPHQQLKEVSVEERPP). The interval 1322–1353 (KPHQQLKEVSVEERPPVSRAAPQPEKLQKNNI) is disordered. WD repeat units follow at residues 1412 to 1456 (EHTD…TLSM), 1460 to 1501 (FHSK…KVAS), 1504 to 1543 (GHLE…LLYK), 1553 to 1591 (AKMQ…RLVA), 1593 to 1638 (AHTG…CRAF), 1685 to 1724 (HMEG…LLNK), 1726 to 1767 (SLGH…GKKR), 1768 to 1807 (DRKS…NLNR), 1880 to 1919 (ADKA…KFAK), and 1925 to 1958 (GHSA…WRCL).

Belongs to the WD repeat EMAP family.

It localises to the cytoplasm. The protein resides in the cytoskeleton. Functionally, may modify the assembly dynamics of microtubules, such that microtubules are slightly longer, but more dynamic. The chain is Echinoderm microtubule-associated protein-like 6 (EML6) from Homo sapiens (Human).